The primary structure comprises 188 residues: PRA1 family protein 3 (188 aa).

At M1 the chain carries N-acetylmethionine. Residues 1–35 are Cytoplasmic-facing; that stretch reads MEVQVAPLRSWEDFFPGSDRFGRPDFKDISKWNNR. 2 helical membrane passes run 36-56 and 57-77; these read VVNN…AVVA and IVGF…ILVF. Topologically, residues 78–93 are cytoplasmic; it reads LGFVWVSHNKDILRRM. A run of 2 helical transmembrane segments spans residues 94-114 and 115-135; these read KKQY…FLIS and YLGD…LMFI. Topologically, residues 136–188 are cytoplasmic; the sequence is HASLRLRNIKNKLENKKEEIGLKKTPMGIILDALEQQEDNINKLASYIPKVKE. Residues 136–188 are targeting to endoplasmic reticulum membrane; that stretch reads HASLRLRNIKNKLENKKEEIGLKKTPMGIILDALEQQEDNINKLASYIPKVKE.

The protein belongs to the PRA1 family. As to quaternary structure, binds to prenylated RAB and Ras superfamily members.

The protein localises to the endoplasmic reticulum membrane. Its subcellular location is the cell membrane. It is found in the cytoplasm. It localises to the cytoskeleton. Functionally, regulates intracellular concentrations of taurine and glutamate. Negatively modulates SLC1A1/EAAC1 glutamate transport activity by decreasing its affinity for glutamate in a PKC activity-dependent manner. May be involved in membrane traffic. The chain is PRA1 family protein 3 (ARL6IP5) from Gallus gallus (Chicken).